A 273-amino-acid chain; its full sequence is 3-methyl-2-oxobutanoate hydroxymethyltransferase (273 aa).

2 residues coordinate Mg(2+): D53 and D92. Residues 53–54 (DS), D92, and K122 each bind 3-methyl-2-oxobutanoate. E124 is a binding site for Mg(2+). E191 (proton acceptor) is an active-site residue.

It belongs to the PanB family. In terms of assembly, homodecamer; pentamer of dimers. It depends on Mg(2+) as a cofactor.

Its subcellular location is the cytoplasm. The catalysed reaction is 3-methyl-2-oxobutanoate + (6R)-5,10-methylene-5,6,7,8-tetrahydrofolate + H2O = 2-dehydropantoate + (6S)-5,6,7,8-tetrahydrofolate. It participates in cofactor biosynthesis; (R)-pantothenate biosynthesis; (R)-pantoate from 3-methyl-2-oxobutanoate: step 1/2. Catalyzes the reversible reaction in which hydroxymethyl group from 5,10-methylenetetrahydrofolate is transferred onto alpha-ketoisovalerate to form ketopantoate. The chain is 3-methyl-2-oxobutanoate hydroxymethyltransferase from Bacteroides fragilis (strain ATCC 25285 / DSM 2151 / CCUG 4856 / JCM 11019 / LMG 10263 / NCTC 9343 / Onslow / VPI 2553 / EN-2).